A 338-amino-acid polypeptide reads, in one-letter code: Glutaminase (338 aa).

Residues serine 80, asparagine 130, glutamate 174, asparagine 181, tyrosine 205, tyrosine 257, and valine 275 each contribute to the substrate site.

The protein belongs to the glutaminase family. As to quaternary structure, homotetramer.

It carries out the reaction L-glutamine + H2O = L-glutamate + NH4(+). The protein is Glutaminase of Microcystis aeruginosa (strain NIES-843 / IAM M-2473).